A 600-amino-acid chain; its full sequence is Torsin-1A-interacting protein 1 (600 aa).

The segment covering 1–14 (MAGEGQRAEPEREG) has biased composition (basic and acidic residues). 2 disordered regions span residues 1–261 (MAGE…YKES) and 310–346 (MRSIYGSFSDDDSVQKSELGNQSPSTSNQQMTGQPKS). At 1–354 (MAGEGQRAEP…KSVSSVKTKR (354 aa)) the chain is on the nuclear side. Phosphoserine is present on Ser-61. 3 stretches are compositionally biased toward basic and acidic residues: residues 71–81 (FEPRAAKEKAR), 91–102 (FRPDSAKEEVRE), and 116–125 (RLHEAEEMQT). Phosphoserine occurs at positions 137, 145, 156, 158, 159, and 189. Residues 192-203 (PLISLRRPPLRS) show a composition bias toward low complexity. A compositionally biased stretch (acidic residues) spans 219-232 (EEGETEENDQDSFD). Residue Thr-223 is modified to Phosphothreonine. 3 positions are modified to phosphoserine: Ser-230, Ser-233, and Ser-244. Residues 247–261 (SGDQTTRSSSQYKES) show a composition bias toward polar residues. Ser-322 is modified (phosphoserine). Residue Lys-325 forms a Glycyl lysine isopeptide (Lys-Gly) (interchain with G-Cter in SUMO2) linkage. Over residues 325–346 (KSELGNQSPSTSNQQMTGQPKS) the composition is skewed to polar residues. Phosphoserine is present on Ser-332. A helical transmembrane segment spans residues 355 to 371 (YWPFAVIAALLIGGFLY). Residues 372 to 600 (TRPPEAETTA…ENDLKKGICL (229 aa)) lie on the Perinuclear space side of the membrane. The interval 373 to 600 (RPPEAETTAV…ENDLKKGICL (228 aa)) is interaction with TOR1A. Positions 376 to 452 (EAETTAVQEF…SEQIADAYSS (77 aa)) form a coiled coil. A glycan (N-linked (GlcNAc...) asparagine) is linked at Asn-416.

This sequence belongs to the TOR1AIP family. As to quaternary structure, interacts with ATP1B4. Interacts with TOR1A (ATP-bound). Interacts with TOR1B, TOR2A and TOR3A. Interacts with VIM.

The protein resides in the nucleus inner membrane. In terms of biological role, required for nuclear membrane integrity. Induces TOR1A and TOR1B ATPase activity and is required for their location on the nuclear membrane. Binds to A- and B-type lamins. Possible role in membrane attachment and assembly of the nuclear lamina. The chain is Torsin-1A-interacting protein 1 (TOR1AIP1) from Bos taurus (Bovine).